Reading from the N-terminus, the 348-residue chain is Sulfate/thiosulfate import ATP-binding protein CysA (348 aa).

Positions 3 to 237 (IEVRNIVKEF…PASAFVHGFI (235 aa)) constitute an ABC transporter domain. Residue 35–42 (GPSGSGKT) participates in ATP binding.

It belongs to the ABC transporter superfamily. Sulfate/tungstate importer (TC 3.A.1.6) family. The complex is composed of two ATP-binding proteins (CysA), two transmembrane proteins (CysT and CysW) and a solute-binding protein (CysP).

The protein resides in the cell inner membrane. The enzyme catalyses sulfate(out) + ATP + H2O = sulfate(in) + ADP + phosphate + H(+). It catalyses the reaction thiosulfate(out) + ATP + H2O = thiosulfate(in) + ADP + phosphate + H(+). In terms of biological role, part of the ABC transporter complex CysAWTP involved in sulfate/thiosulfate import. Responsible for energy coupling to the transport system. This is Sulfate/thiosulfate import ATP-binding protein CysA from Rhodopseudomonas palustris (strain ATCC BAA-98 / CGA009).